We begin with the raw amino-acid sequence, 536 residues long: Signal peptide peptidase-like 5 (536 aa).

Positions 1 to 29 are cleaved as a signal peptide; sequence MSLPPFTCRLLAAAAALYLIGLLCVGADT. Over 30-186 the chain is Lumenal; it reads KDVTAPKIPG…VELLLYAPKS (157 aa). The 77-residue stretch at 94–170 folds into the PA domain; that stretch reads SNLTSKLSWS…TSSGDALKKS (77 aa). N-linked (GlcNAc...) asparagine glycosylation is found at Asn95 and Asn151. The chain crosses the membrane as a helical span at residues 187 to 207; sequence PIVDYAVVFLWLMSVGTVFVA. Topologically, residues 208 to 243 are cytoplasmic; it reads SVWSHVTSPKKNDEQYDELSPKKSSNVDATKGGAEE. Residues 218-238 form a disordered region; sequence KNDEQYDELSPKKSSNVDATK. A helical transmembrane segment spans residues 244-264; it reads ETLDISAMGAVIFVISASTFL. The Lumenal portion of the chain corresponds to 265–273; sequence VLLFFFMSS. Residues 274–296 form a helical membrane-spanning segment; the sequence is WFILILTIFFVIGGMQGMHNINV. The Cytoplasmic portion of the chain corresponds to 297–318; sequence TLITRRCSKCGQKNLKLPLLGN. A helical transmembrane segment spans residues 319–339; the sequence is TSILSLVVLLFCFVVAILWFM. The Lumenal segment spans residues 340-344; the sequence is NRKTS. The helical transmembrane segment at 345–365 threads the bilayer; the sequence is HAWAGQDIFGICMMINVLQVA. Residues 366 to 374 are Cytoplasmic-facing; the sequence is RLPNIRVAT. A helical transmembrane segment spans residues 375–395; that stretch reads ILLCCAFFYDIFWVFISPLIF. Asp384 is an active-site residue. Residues 396 to 428 are Lumenal-facing; it reads KQSVMIAVARGSKDTGESIPMLLRIPRLSDPWG. A helical transmembrane segment spans residues 429 to 449; sequence GYNMIGFGDILFPGLLICFIF. The active site involves Asp437. Residues 450-463 lie on the Cytoplasmic side of the membrane; that stretch reads RFDKENNKGVSNGY. A helical membrane pass occupies residues 464–484; sequence FPWLMFGYGLGLFLTYLGLYV. Residues 485 to 489 are Lumenal-facing; it reads MNGHG. A helical transmembrane segment spans residues 490 to 510; it reads QPALLYLVPCTLGITVILGLV. A PAL motif is present at residues 491–493; the sequence is PAL. Residues 511-536 are Cytoplasmic-facing; the sequence is RKELRDLWNYGTQQPSAADVNPSPEA.

It belongs to the peptidase A22B family. Glycosylated.

The protein localises to the endosome membrane. Functionally, intramembrane-cleaving aspartic protease (I-CLiP) that cleaves type II membrane signal peptides in the hydrophobic plane of the membrane. The chain is Signal peptide peptidase-like 5 (SPPL5) from Arabidopsis thaliana (Mouse-ear cress).